Consider the following 218-residue polypeptide: uncharacterized protein (218 aa).

The region spanning 7 to 123 is the Response regulatory domain; the sequence is RVALADDQPL…ELIDAIRAAA (117 aa). At D58 the chain carries 4-aspartylphosphate. The 66-residue stretch at 150-215 folds into the HTH luxR-type domain; it reads AEELAEPFTK…QAVVFAIRNG (66 aa). The H-T-H motif DNA-binding region spans 174 to 193; that stretch reads NEDIAEKLFVSESTVKTHVH.

Post-translationally, phosphorylated by YxjM.

It localises to the cytoplasm. Its function is as follows. Probable member of the two-component regulatory system YxjM/YxjL. This is an uncharacterized protein from Bacillus subtilis (strain 168).